Here is a 126-residue protein sequence, read N- to C-terminus: C2H2-type zinc-finger transcription factor M5 (126 aa).

Disordered stretches follow at residues 17-52 (AQPD…NDNR) and 103-126 (EKKS…RVKD). A compositionally biased stretch (polar residues) spans 38-48 (SNGSSSGTATD). The C2H2-type 1; degenerate zinc-finger motif lies at 51–76 (NRCWDHGCNGKKFLNHSNLVRHRREN). Residues 83 to 115 (FTCPMCGAYFSRSTARNQHLEKKSCNRVRRYSN) form a C2H2-type 2; degenerate zinc finger. Basic and acidic residues predominate over residues 115 to 126 (NGRERPRPRVKD).

The protein belongs to the GLI C2H2-type zinc-finger protein family.

It is found in the nucleus. Functionally, transcription factor that probably regulates the expression of the gene cluster that mediates the biosynthesis of squalestatin S1 (SQS1, also known as zaragozic acid A), a heavily oxidized fungal polyketide that offers potent cholesterol lowering activity by targeting squalene synthase (SS). This is C2H2-type zinc-finger transcription factor M5 from Phoma sp. (strain ATCC 20986 / MF5453).